Consider the following 1472-residue polypeptide: Type IV pilus biogenesis factor PilY1 homolog PD_1611 (1472 aa).

Asp-1170, Asp-1172, Asp-1174, Leu-1176, and Asp-1178 together coordinate Ca(2+). Residues 1383–1397 (RGSRSSIGNSDTGAV) are compositionally biased toward polar residues. The tract at residues 1383–1403 (RGSRSSIGNSDTGAVSTGGDA) is disordered.

This sequence belongs to the PilY1 family.

The protein localises to the fimbrium. Its function is as follows. One of the three PilY1 homologs of X.fastidiosa, which are involved in bacterial twitching motility as component of the filamentous type IV pili (T4P). The twitching motility of this protein is enhanced by calcium, which may provide the bacterium an adaptive advantage in environments with high calcium concentrations. This chain is Type IV pilus biogenesis factor PilY1 homolog PD_1611, found in Xylella fastidiosa (strain Temecula1 / ATCC 700964).